A 262-amino-acid polypeptide reads, in one-letter code: tRNA 4-demethylwyosine(37)-methyltransferase Taw21 (262 aa).

S-adenosyl-L-methionine contacts are provided by residues histidine 108, phenylalanine 125, 148–149 (DL), and 175–176 (DA).

It belongs to the class I-like SAM-binding methyltransferase superfamily. TRM5/TYW2 family.

It localises to the cytoplasm. The catalysed reaction is 4-demethylwyosine(37) in tRNA(Phe) + S-adenosyl-L-methionine = isowyosine(37) in tRNA(Phe) + S-adenosyl-L-homocysteine + H(+). Functionally, catalyzes the C7-methylation of 4-demethylwyosine (imG-14) at position 37 in tRNA(Phe). The sequence is that of tRNA 4-demethylwyosine(37)-methyltransferase Taw21 from Saccharolobus solfataricus (strain ATCC 35092 / DSM 1617 / JCM 11322 / P2) (Sulfolobus solfataricus).